The primary structure comprises 202 residues: dITP/XTP pyrophosphatase (202 aa).

Substrate is bound at residue 11–16; sequence TNNANK. Catalysis depends on aspartate 73, which acts as the Proton acceptor. A Mg(2+)-binding site is contributed by aspartate 73. Substrate contacts are provided by residues serine 74, 155–158, lysine 178, and 183–184; these read FGYD and HR.

The protein belongs to the HAM1 NTPase family. In terms of assembly, homodimer. Mg(2+) serves as cofactor.

It catalyses the reaction XTP + H2O = XMP + diphosphate + H(+). It carries out the reaction dITP + H2O = dIMP + diphosphate + H(+). The enzyme catalyses ITP + H2O = IMP + diphosphate + H(+). Pyrophosphatase that catalyzes the hydrolysis of nucleoside triphosphates to their monophosphate derivatives, with a high preference for the non-canonical purine nucleotides XTP (xanthosine triphosphate), dITP (deoxyinosine triphosphate) and ITP. Seems to function as a house-cleaning enzyme that removes non-canonical purine nucleotides from the nucleotide pool, thus preventing their incorporation into DNA/RNA and avoiding chromosomal lesions. The chain is dITP/XTP pyrophosphatase from Lactiplantibacillus plantarum (strain ATCC BAA-793 / NCIMB 8826 / WCFS1) (Lactobacillus plantarum).